Consider the following 81-residue polypeptide: Putative membrane protein insertion efficiency factor (81 aa).

It belongs to the UPF0161 family.

It localises to the cell inner membrane. Functionally, could be involved in insertion of integral membrane proteins into the membrane. This chain is Putative membrane protein insertion efficiency factor, found in Legionella pneumophila (strain Lens).